The primary structure comprises 251 residues: Uroporphyrinogen-III synthase (251 aa).

A disordered region spans residues 231–251 (PAPNPESLASSIVAFDEENSS).

The protein belongs to the uroporphyrinogen-III synthase family.

It carries out the reaction hydroxymethylbilane = uroporphyrinogen III + H2O. The protein operates within porphyrin-containing compound metabolism; protoporphyrin-IX biosynthesis; coproporphyrinogen-III from 5-aminolevulinate: step 3/4. Functionally, catalyzes cyclization of the linear tetrapyrrole, hydroxymethylbilane, to the macrocyclic uroporphyrinogen III. In Schizosaccharomyces pombe (strain 972 / ATCC 24843) (Fission yeast), this protein is Uroporphyrinogen-III synthase (ups1).